A 75-amino-acid chain; its full sequence is Phytosulfokines 3 (75 aa).

Residues methionine 1–glycine 22 form the signal peptide. The propeptide occupies glycine 23–aspartate 66. Residues tyrosine 67 and tyrosine 69 each carry the sulfotyrosine modification. Residues glycine 72–asparagine 75 constitute a propeptide that is removed on maturation.

The protein belongs to the phytosulfokine family. Post-translationally, sulfation is important for activity and for the binding to a putative membrane receptor. PSK-alpha is produced by endopeptidase digestion. PSK-beta is produced from PSK-alpha by exopeptidase digestion.

The protein resides in the secreted. Promotes plant cell differentiation, organogenesis and somatic embryogenesis as well as cell proliferation. This chain is Phytosulfokines 3 (PSK3), found in Oryza sativa subsp. japonica (Rice).